The primary structure comprises 901 residues: MTTQLNINSVIENAKRVITPLSPISIFAARNPWEGLEADTFEDVAKWLRDVRDVDIFPNKALIESAVARGELDESVFNQLVTDMLLEHHYNIPQHYINLYIDNIKTLKDVPASYMNHSNVDVVADLLLEKSKRDMAESYHHYDVRPMSDAIIDEQGEPLSEQVNRQMIKWTKLYIDQFLSSWTMPKREQSFYHAWLHLAQHDHSFTKAQRQVIKGLPNDPKMTIESVLNHFSIAQEDYQAYVEGHLLALPGWAGILYYRSQQHHFEQHLLTDYLAIRLVVEQLLVGDEFKSVTKDCESRSENWFKQTVASWCYYSDMPSDVLLQHDVNEIQTFIHFAATMNKNVFKNLWLIAWEMTYESQLKQKIKAGHESVAGALDVNQVNVTENDNANQSHSVSLNATQAVDENNSELNQVGTSTKAQIAFCIDVRSEPFRRHIEAAGPFETIGIAGFFGLPIQKDAVDEQFKHDSLPVMVPPAYRIKEFADRYDMNVYRQQQQTMSSMFYTFKLMKNNVMPSLLLPELSGPFLSLSTIVNSIMPRKSRVSLQKIKQKWLKKPETKLTIDREFDRTSDLPVGFTEQEQIDFALQALKLMDLTEAFAPFVVLAGHASHSHNNPHHASLECGACGGASSGFNAKLLAMICNRPNVRQGLKQAGVYIPETTVFAAAEHHTSTDTLAWVYVPDTLSALALDAYESLNDVMPMISEHANRERLDKLPTIGRVNHPVEEAQRFASDWSEVRPEWGLAKNASFIIGRRQLTKGIDLEGRTFLHNYDWRKDKDGKLLNTIISGPALVAQWINLQYYASTVAPHFYGSGNKATQTVTSGVGVMQGNASDLMYGLSWQSVMAADRTMYHSPIRLLVVVQAPDFVVARLLANNEHFARKVSNHWLRLMSVNEEGRFKSWI.

Residues Cys-424, Asp-426, His-606, and Cys-621 each coordinate Zn(2+).

This sequence belongs to the inorganic carbon transporter (TC 9.A.2) DabA family. Forms a complex with DabB. It depends on Zn(2+) as a cofactor.

It is found in the cell membrane. Part of an energy-coupled inorganic carbon pump. The sequence is that of Probable inorganic carbon transporter subunit DabA from Staphylococcus aureus (strain MRSA252).